A 552-amino-acid polypeptide reads, in one-letter code: Carboxypeptidase Y homolog A (552 aa).

The first 18 residues, 1–18 (MRIATSTLLVGAASAAFA), serve as a signal peptide directing secretion. A propeptide spanning residues 19–133 (PQDGTQRVLN…KLDNYNLRAR (115 aa)) is cleaved from the precursor. Intrachain disulfides connect Cys-187–Cys-427, Cys-321–Cys-335, Cys-345–Cys-368, Cys-352–Cys-361, and Cys-390–Cys-397. An N-linked (GlcNAc...) asparagine glycan is attached at Asn-218. Ser-274 is an active-site residue. Residue Asp-466 is part of the active site. N-linked (GlcNAc...) asparagine glycosylation occurs at Asn-516. His-527 is a catalytic residue.

This sequence belongs to the peptidase S10 family.

It localises to the vacuole. The enzyme catalyses Release of a C-terminal amino acid with broad specificity.. Vacuolar carboxypeptidase involved in degradation of small peptides. Digests preferentially peptides containing an aliphatic or hydrophobic residue in P1' position, as well as methionine, leucine or phenylalanine in P1 position of ester substrate. The protein is Carboxypeptidase Y homolog A (CPYA) of Pyricularia oryzae (strain 70-15 / ATCC MYA-4617 / FGSC 8958) (Rice blast fungus).